A 361-amino-acid polypeptide reads, in one-letter code: Peptide chain release factor 1 (361 aa).

Position 238 is an N5-methylglutamine (glutamine 238).

Belongs to the prokaryotic/mitochondrial release factor family. In terms of processing, methylated by PrmC. Methylation increases the termination efficiency of RF1.

The protein localises to the cytoplasm. Peptide chain release factor 1 directs the termination of translation in response to the peptide chain termination codons UAG and UAA. The protein is Peptide chain release factor 1 of Mesomycoplasma hyopneumoniae (strain 232) (Mycoplasma hyopneumoniae).